The chain runs to 1083 residues: Ubiquitin-protein ligase E3C (1083 aa).

Composition is skewed to basic and acidic residues over residues methionine 1 to threonine 10 and serine 20 to glutamate 40. The tract at residues methionine 1–glutamate 40 is disordered. A cis-determinant of acceptor ubiquitin-binding region spans residues methionine 1 to arginine 60. The IQ domain occupies arginine 45–aspartate 74. The segment at alanine 354–valine 386 is disordered. The segment covering serine 366–aspartate 376 has biased composition (acidic residues). Positions asparagine 744 to serine 1083 constitute an HECT domain. Lysine 903 participates in a covalent cross-link: Glycyl lysine isopeptide (Lys-Gly) (interchain with G-Cter in ubiquitin); by autocatalysis. Residue cysteine 1051 is the Glycyl thioester intermediate of the active site.

It belongs to the UBE3C family. In terms of assembly, interacts with 26S proteasomes. Interacts (via the HECT domain) with UBE2D1 and, less efficiently, with UBE2L3. In terms of processing, autoubiquitinated; promoting its own degradation.

It catalyses the reaction S-ubiquitinyl-[E2 ubiquitin-conjugating enzyme]-L-cysteine + [acceptor protein]-L-lysine = [E2 ubiquitin-conjugating enzyme]-L-cysteine + N(6)-ubiquitinyl-[acceptor protein]-L-lysine.. It functions in the pathway protein modification; protein ubiquitination. In terms of biological role, E3 ubiquitin-protein ligase that specifically catalyzes 'Lys-29'- and 'Lys-48'-linked polyubiquitin chains. Accepts ubiquitin from the E2 ubiquitin-conjugating enzyme UBE2D1 in the form of a thioester and then directly transfers the ubiquitin to targeted substrates. Associates with the proteasome and promotes elongation of ubiquitin chains on substrates bound to the 26S proteasome. Also catalyzes 'Lys-29'- and 'Lys-48'-linked ubiquitination of 26S proteasome subunit ADRM1/RPN13 in response to proteotoxic stress, impairing the ability of the proteasome to bind and degrade ubiquitin-conjugated proteins. Acts as a negative regulator of autophagy by mediating 'Lys-29'- and 'Lys-48'-linked ubiquitination of PIK3C3/VPS34, promoting its degradation. Can assemble unanchored poly-ubiquitin chains in either 'Lys-29'- or 'Lys-48'-linked polyubiquitin chains; with some preference for 'Lys-48' linkages. Acts as a negative regulator of type I interferon by mediating 'Lys-48'-linked ubiquitination of IRF3 and IRF7, leading to their degradation by the proteasome. Catalyzes ubiquitination and degradation of CAND2. This Mus musculus (Mouse) protein is Ubiquitin-protein ligase E3C.